The primary structure comprises 281 residues: Fructose-bisphosphate aldolase class 1 (281 aa).

The active-site Schiff-base intermediate with dihydroxyacetone-P is K191.

It belongs to the DeoC/FbaB aldolase family. In terms of assembly, homooctamer.

It localises to the cytoplasm. The enzyme catalyses beta-D-fructose 1,6-bisphosphate = D-glyceraldehyde 3-phosphate + dihydroxyacetone phosphate. Activated by citrate. This chain is Fructose-bisphosphate aldolase class 1 (fba), found in Pyrococcus furiosus (strain ATCC 43587 / DSM 3638 / JCM 8422 / Vc1).